The chain runs to 118 residues: V-type proton ATPase subunit G 2 (118 aa).

The stretch at 8–57 forms a coiled coil; that stretch reads IQQLLQAEKRAAEKVADARKRKARRLKQAKEEAQMEVDQYRREREQEFQS. The interval 25 to 90 is disordered; sequence ARKRKARRLK…VQGMQSSQQR (66 aa). The segment covering 35–55 has biased composition (basic and acidic residues); sequence QAKEEAQMEVDQYRREREQEF. 2 stretches are compositionally biased toward polar residues: residues 56–69 and 78–89; these read QSKQ…QGNL and RRQVQGMQSSQQ.

It belongs to the V-ATPase G subunit family. As to quaternary structure, V-ATPase is a heteromultimeric enzyme made up of two complexes: the ATP-hydrolytic V1 complex and the proton translocation V0 complex. The V1 complex consists of three catalytic AB heterodimers that form a heterohexamer, three peripheral stalks each consisting of EG heterodimers, one central rotor including subunits D and F, and the regulatory subunits C and H. The proton translocation complex V0 consists of the proton transport subunit a, a ring of proteolipid subunits c9c'', rotary subunit d, subunits e and f, and the accessory subunits ATP6AP1/Ac45 and ATP6AP2/PRR. As to expression, expressed in brain (at protein level).

The protein localises to the melanosome. Its subcellular location is the cytoplasmic vesicle. The protein resides in the clathrin-coated vesicle membrane. In terms of biological role, subunit of the V1 complex of vacuolar(H+)-ATPase (V-ATPase), a multisubunit enzyme composed of a peripheral complex (V1) that hydrolyzes ATP and a membrane integral complex (V0) that translocates protons. V-ATPase is responsible for acidifying and maintaining the pH of intracellular compartments and in some cell types, is targeted to the plasma membrane, where it is responsible for acidifying the extracellular environment. The sequence is that of V-type proton ATPase subunit G 2 from Bos taurus (Bovine).